A 152-amino-acid polypeptide reads, in one-letter code: Ribosomal RNA large subunit methyltransferase H (152 aa).

S-adenosyl-L-methionine contacts are provided by residues Leu-69, Gly-96, and Phe-118–Phe-123.

It belongs to the RNA methyltransferase RlmH family. Homodimer.

It is found in the cytoplasm. It carries out the reaction pseudouridine(1915) in 23S rRNA + S-adenosyl-L-methionine = N(3)-methylpseudouridine(1915) in 23S rRNA + S-adenosyl-L-homocysteine + H(+). Its function is as follows. Specifically methylates the pseudouridine at position 1915 (m3Psi1915) in 23S rRNA. The protein is Ribosomal RNA large subunit methyltransferase H of Mesomycoplasma hyopneumoniae (strain 7448) (Mycoplasma hyopneumoniae).